The chain runs to 79 residues: Small ribosomal subunit protein uS17 (79 aa).

Belongs to the universal ribosomal protein uS17 family. Part of the 30S ribosomal subunit.

Its function is as follows. One of the primary rRNA binding proteins, it binds specifically to the 5'-end of 16S ribosomal RNA. This is Small ribosomal subunit protein uS17 from Caulobacter vibrioides (strain NA1000 / CB15N) (Caulobacter crescentus).